The sequence spans 103 residues: uncharacterized protein (103 aa).

It localises to the mitochondrion. This is an uncharacterized protein from Claviceps purpurea (Ergot fungus).